A 1000-amino-acid polypeptide reads, in one-letter code: Vacuolar protein-sorting protein bro1 (1000 aa).

The BRO1 domain maps to 5 to 406 (PMISCPLKQT…EKVETADGEM (402 aa)). The stretch at 732 to 793 (YAEMTETVDS…RQLMERLSTE (62 aa)) forms a coiled coil. Disordered stretches follow at residues 760–857 (LLGQ…PYSQ) and 891–1000 (PIPA…NAWK). Basic and acidic residues predominate over residues 764 to 792 (IEREKAAGTSDHEEREREKLRQLMERLST). Residues 840–849 (VPQQHGTPVS) show a composition bias toward polar residues. Composition is skewed to pro residues over residues 898–922 (SPPP…PPVP) and 931–954 (YVPP…PFPS). Residues 981-991 (TGPSVSANSSD) show a composition bias toward polar residues.

This sequence belongs to the BRO1 family.

It localises to the cytoplasm. The protein resides in the endosome. Its function is as follows. Involved in concentration and sorting of cargo proteins of the multivesicular body (MVB) for incorporation into intralumenal vesicles. The sequence is that of Vacuolar protein-sorting protein bro1 (broA) from Emericella nidulans (strain FGSC A4 / ATCC 38163 / CBS 112.46 / NRRL 194 / M139) (Aspergillus nidulans).